A 267-amino-acid polypeptide reads, in one-letter code: 2-keto-3-deoxy-L-rhamnonate aldolase (267 aa).

Catalysis depends on H49, which acts as the Proton acceptor. Q151 contacts substrate. Position 153 (E153) interacts with Mg(2+). Residues A178 and D179 each coordinate substrate. D179 lines the Mg(2+) pocket.

This sequence belongs to the HpcH/HpaI aldolase family. KDR aldolase subfamily. Homohexamer. Requires Mg(2+) as cofactor.

The enzyme catalyses 2-dehydro-3-deoxy-L-rhamnonate = (S)-lactaldehyde + pyruvate. In terms of biological role, catalyzes the reversible retro-aldol cleavage of 2-keto-3-deoxy-L-rhamnonate (KDR) to pyruvate and lactaldehyde. The protein is 2-keto-3-deoxy-L-rhamnonate aldolase of Salmonella agona (strain SL483).